We begin with the raw amino-acid sequence, 489 residues long: MQAPVLMVVGTASSVGKSTLVTALCRLAYRRGLRVAPFKAQNMSNNAAVTADGKEIARSTAVQAAAAGIAPTVAMNPILIKPEGQRRSQIIVEGRPWQSLTATDFWQRKAQLWSVVTRNLDHLRATYDLVIAEGAGSPVELNLKPGDIVNMRVARYAQAQTILVGDIDRGGIFAQLLGTLMLLEPEERQLITGCIVNRFRGDPSLFADGVTILEERSGLPVLGVIPWLDDLGLPEEDAVALEQPPVAPAHGLIIAVIRLPTIANFDDFDPLAREPGVVVRYIDHPLELTGAAAVILPGVKHTLAARHWLHERGFDNALREFTGAIVGICGGYQLLGERISDPLAVEGSGGEAAGLGLLPIETIFTTAKQTTQTIACAQVPWAGNEPLQGYEIHMGQSYRRGEAPAFLRIIQRGNTPTSADDGCISSDGRVWGCYLHGIFANDTFRRGWLRRLGWQPPTTPVARADPFDRLADHVAAALGPAVLDRLMRR.

The GATase cobBQ-type domain maps to 251–444 (GLIIAVIRLP…LHGIFANDTF (194 aa)). The Nucleophile role is filled by cysteine 329. Histidine 436 is an active-site residue.

This sequence belongs to the CobB/CobQ family. CobQ subfamily.

Its pathway is cofactor biosynthesis; adenosylcobalamin biosynthesis. Its function is as follows. Catalyzes amidations at positions B, D, E, and G on adenosylcobyrinic A,C-diamide. NH(2) groups are provided by glutamine, and one molecule of ATP is hydrogenolyzed for each amidation. In Chloroflexus aurantiacus (strain ATCC 29366 / DSM 635 / J-10-fl), this protein is Cobyric acid synthase.